Here is a 290-residue protein sequence, read N- to C-terminus: Porphobilinogen deaminase (290 aa).

Cys238 carries the post-translational modification S-(dipyrrolylmethanemethyl)cysteine.

It belongs to the HMBS family. Monomer. Dipyrromethane serves as cofactor.

It catalyses the reaction 4 porphobilinogen + H2O = hydroxymethylbilane + 4 NH4(+). It functions in the pathway porphyrin-containing compound metabolism; protoporphyrin-IX biosynthesis; coproporphyrinogen-III from 5-aminolevulinate: step 2/4. Tetrapolymerization of the monopyrrole PBG into the hydroxymethylbilane pre-uroporphyrinogen in several discrete steps. The sequence is that of Porphobilinogen deaminase from Caldicellulosiruptor saccharolyticus (strain ATCC 43494 / DSM 8903 / Tp8T 6331).